The sequence spans 663 residues: Zeaxanthin epoxidase, chloroplastic (663 aa).

The transit peptide at 1 to 50 (MYSTVFYTSVHPSTSAFSRKQLPLLISKDFPTELYHSLPCSRSLENGQIK) directs the protein to the chloroplast. Residues 81-109 (KVLV…LVFE) and 359-372 (TFSW…LLGD) each bind FAD. The FHA domain occupies 547–611 (LVLSRDENMP…HGTWITDNEG (65 aa)).

FAD serves as cofactor. Higher expression in leaves than in roots.

It is found in the plastid. The protein resides in the chloroplast membrane. It localises to the chloroplast thylakoid membrane. It catalyses the reaction all-trans-zeaxanthin + 4 reduced [2Fe-2S]-[ferredoxin] + 2 O2 + 4 H(+) = all-trans-violaxanthin + 4 oxidized [2Fe-2S]-[ferredoxin] + 2 H2O. Its pathway is plant hormone biosynthesis; abscisate biosynthesis. Functionally, converts zeaxanthin into antheraxanthin and subsequently violaxanthin. Involved in the epoxidation of zeaxanthin. Plays an important role in resistance to stresses, seed development and dormancy. The protein is Zeaxanthin epoxidase, chloroplastic (ABA2) of Nicotiana plumbaginifolia (Leadwort-leaved tobacco).